We begin with the raw amino-acid sequence, 175 residues long: ATP-dependent protease subunit HslV (175 aa).

T5 is an active-site residue. 3 residues coordinate Na(+): G160, D163, and T166.

Belongs to the peptidase T1B family. HslV subfamily. As to quaternary structure, a double ring-shaped homohexamer of HslV is capped on each side by a ring-shaped HslU homohexamer. The assembly of the HslU/HslV complex is dependent on binding of ATP.

The protein resides in the cytoplasm. The catalysed reaction is ATP-dependent cleavage of peptide bonds with broad specificity.. With respect to regulation, allosterically activated by HslU binding. Protease subunit of a proteasome-like degradation complex believed to be a general protein degrading machinery. This Myxococcus xanthus protein is ATP-dependent protease subunit HslV.